We begin with the raw amino-acid sequence, 419 residues long: Serine/threonine-protein kinase Kist (419 aa).

The region spanning 23-304 is the Protein kinase domain; that stretch reads WQVQSRLGSG…AEMALCSPFF (282 aa). ATP is bound by residues 29-37 and lysine 54; that span reads LGSGSSASV. Active-site proton acceptor residues include aspartate 141 and aspartate 158. Residues 324 to 406 enclose the RRM domain; sequence RLLNVLDDDY…KFVVATFYPL (83 aa).

The protein belongs to the protein kinase superfamily. Ser/Thr protein kinase family. Interacts with stathmin, PAM and CDKN1B/p27Kip1.

The protein localises to the nucleus. It catalyses the reaction L-seryl-[protein] + ATP = O-phospho-L-seryl-[protein] + ADP + H(+). It carries out the reaction L-threonyl-[protein] + ATP = O-phospho-L-threonyl-[protein] + ADP + H(+). Upon serum stimulation, phosphorylates CDKN1B/p27Kip1, thus controlling CDKN1B subcellular location and cell cycle progression in G1 phase. May be involved in trafficking and/or processing of RNA. This is Serine/threonine-protein kinase Kist (UHMK1) from Pongo abelii (Sumatran orangutan).